A 1088-amino-acid polypeptide reads, in one-letter code: DNA-directed RNA polymerase subunit beta (1088 aa).

The protein belongs to the RNA polymerase beta chain family. As to quaternary structure, in plastids the minimal PEP RNA polymerase catalytic core is composed of four subunits: alpha, beta, beta', and beta''. When a (nuclear-encoded) sigma factor is associated with the core the holoenzyme is formed, which can initiate transcription.

It is found in the plastid. Its subcellular location is the chloroplast. The enzyme catalyses RNA(n) + a ribonucleoside 5'-triphosphate = RNA(n+1) + diphosphate. Its function is as follows. DNA-dependent RNA polymerase catalyzes the transcription of DNA into RNA using the four ribonucleoside triphosphates as substrates. The protein is DNA-directed RNA polymerase subunit beta of Ostreococcus tauri.